Here is a 217-residue protein sequence, read N- to C-terminus: Pyridoxine/pyridoxamine 5'-phosphate oxidase (217 aa).

Substrate is bound by residues 13 to 16 (RREY) and K71. Residues 66 to 71 (RIVLLK), 81 to 82 (YT), R87, K88, and Q110 contribute to the FMN site. The substrate site is built by Y128, R132, and S136. FMN contacts are provided by residues 145-146 (QS) and W190. 196-198 (RLH) lines the substrate pocket. R200 lines the FMN pocket.

Belongs to the pyridoxamine 5'-phosphate oxidase family. As to quaternary structure, homodimer. The cofactor is FMN.

The enzyme catalyses pyridoxamine 5'-phosphate + O2 + H2O = pyridoxal 5'-phosphate + H2O2 + NH4(+). The catalysed reaction is pyridoxine 5'-phosphate + O2 = pyridoxal 5'-phosphate + H2O2. It functions in the pathway cofactor metabolism; pyridoxal 5'-phosphate salvage; pyridoxal 5'-phosphate from pyridoxamine 5'-phosphate: step 1/1. Its pathway is cofactor metabolism; pyridoxal 5'-phosphate salvage; pyridoxal 5'-phosphate from pyridoxine 5'-phosphate: step 1/1. Catalyzes the oxidation of either pyridoxine 5'-phosphate (PNP) or pyridoxamine 5'-phosphate (PMP) into pyridoxal 5'-phosphate (PLP). This Proteus mirabilis (strain HI4320) protein is Pyridoxine/pyridoxamine 5'-phosphate oxidase.